A 97-amino-acid polypeptide reads, in one-letter code: Large ribosomal subunit protein bL28 (97 aa).

The protein belongs to the bacterial ribosomal protein bL28 family.

The polypeptide is Large ribosomal subunit protein bL28 (Bartonella quintana (strain Toulouse) (Rochalimaea quintana)).